We begin with the raw amino-acid sequence, 212 residues long: Transmembrane emp24 domain-containing protein p24delta4 (212 aa).

A signal peptide spans 1–25; it reads MKKKMIPTTILLSALIFSLSPICEA. The Lumenal segment spans residues 26–179; sequence VWLTVPHTGS…RIVSEKTNSR (154 aa). The GOLD domain maps to 35-147; it reads SKCVSEEIQS…IEGVELEFKK (113 aa). An N-linked (GlcNAc...) asparagine glycan is attached at N82. Residues 133–155 are a coiled coil; the sequence is ARKEKIEGVELEFKKLEGAVEAI. Omega-N-methylated arginine occurs at positions 165 and 170. A helical membrane pass occupies residues 180-200; it reads VAWYSIMSLGICIVVSGLQIL. Topologically, residues 201-212 are cytoplasmic; it reads YLKQYFEKKKLI. The COPII vesicle coat-binding motif lies at 205–206; sequence YF. The COPI vesicle coat-binding motif lies at 205-212; the sequence is YFEKKKLI.

This sequence belongs to the EMP24/GP25L family. As to quaternary structure, probably oligomerizes with other members of the EMP24/GP25L family. Associates with the COPI vesicle coat (coatomer). Associates with the COPII vesicle coat (coatomer).

The protein localises to the endoplasmic reticulum membrane. The protein resides in the golgi apparatus membrane. Functionally, involved in vesicular protein trafficking. Mainly functions in the early secretory pathway. Required for trafficking GLL23, a component of the PYK10 complex. May act as a receptor facilitating its packing into COPII carriers and export from the endoplasmic reticulum. The protein is Transmembrane emp24 domain-containing protein p24delta4 (CYB) of Arabidopsis thaliana (Mouse-ear cress).